A 90-amino-acid chain; its full sequence is Small ribosomal subunit protein uS15c (90 aa).

This sequence belongs to the universal ribosomal protein uS15 family. As to quaternary structure, part of the 30S ribosomal subunit.

The protein resides in the plastid. It localises to the chloroplast. This is Small ribosomal subunit protein uS15c (rps15) from Secale cereale (Rye).